The sequence spans 778 residues: MNLTEDCMVFEDVAIYFSQEEWGILNDAQRHLHSNVMLENFALLSSVGCWHGAKDEEVPSKQCVSVRVLQVTIPKPALSTLKAQPCKMCSSILKDILHLAEHDGTHPEQGLYTCAAEHDLHQKEQIREKLTRSDEWRPSFVNHSAHVGERNFTCTQGGKDFTASSDLLQQQVLNSGWKLYRDTQDGEAFQGEQNDFNSSQGGKDFCHQHGLFEHQKTHNGERPYEFSECGELFRYNSNLIKYQQNHAGERPYEGTEYGKTFIRKSNLVQHQKIHSEGFLSKRSDPIEHQEILSRPTPYECTQCGKAFLTQAHLVGHQKTHTGEQPYECNKCGKFFMYNSKLIRHQKVHTGERRYECSECGKLFMDSFTLGRHQRVHTGERPFECSICGKFFSHRSTLNMHQRVHAGKRLYKCSECGKAFSLKHNVVQHLKIHTGERPYECTECEKAFVRKSHLVQHQKIHTDAFSKRSDLIQHKRIDIRPRPYTCSECGKAFLTQAHLVGHQKIHTGERPYECTQCAKAFVRKSHLVQHEKIHTDAFSKRSDLIQHKRIDLRPRPYVCSECGKAFLTQAHLDGHQKIQTGERRYECNECGKFFLDSYKLVIHQRIHTGEKPYKCSKCGKFFRYRCTLSRHQKVHTGERPYECSECGKFFRDSYKLIIHQRVHTGEKPYECSNCGKFLRYRSTFIKHHKVCTGEKPHECSKCRELFRTKSSLIIHQQSHTGESPFKLRECGKDFNKCNTGQRQKTHTGERSYECGESSKVFKYNSSLIKHQIIHTGKRP.

One can recognise a KRAB domain in the interval 8–101; it reads MVFEDVAIYF…ILKDILHLAE (94 aa). The segment at 152–174 adopts a C2H2-type 1; degenerate zinc-finger fold; that stretch reads FTCTQGGKDFTASSDLLQQQVLN. The C2H2-type 2; degenerate zinc finger occupies 196–218; sequence FNSSQGGKDFCHQHGLFEHQKTH. The C2H2-type 3; degenerate zinc-finger motif lies at 224–246; it reads YEFSECGELFRYNSNLIKYQQNH. The C2H2-type 4; degenerate zinc finger occupies 252-274; it reads YEGTEYGKTFIRKSNLVQHQKIH. 6 C2H2-type zinc fingers span residues 298 to 320, 326 to 348, 354 to 376, 382 to 404, 410 to 432, and 438 to 460; these read YECTQCGKAFLTQAHLVGHQKTH, YECNKCGKFFMYNSKLIRHQKVH, YECSECGKLFMDSFTLGRHQRVH, FECSICGKFFSHRSTLNMHQRVH, YKCSECGKAFSLKHNVVQHLKIH, and YECTECEKAFVRKSHLVQHQKIH. K466 bears the N6-acetyllysine mark. 2 consecutive C2H2-type zinc fingers follow at residues 483 to 505 and 511 to 533; these read YTCSECGKAFLTQAHLVGHQKIH and YECTQCAKAFVRKSHLVQHEKIH. K539 carries the N6-acetyllysine modification. Residues 556–578 form a C2H2-type 13; degenerate zinc finger; the sequence is YVCSECGKAFLTQAHLDGHQKIQ. 3 consecutive C2H2-type zinc fingers follow at residues 584–606, 612–634, and 640–662; these read YECNECGKFFLDSYKLVIHQRIH, YKCSKCGKFFRYRCTLSRHQKVH, and YECSECGKFFRDSYKLIIHQRVH. The C2H2-type 17; atypical zinc finger occupies 668 to 690; that stretch reads YECSNCGKFLRYRSTFIKHHKVC. The C2H2-type 18 zinc finger occupies 696–718; the sequence is HECSKCRELFRTKSSLIIHQQSH. The C2H2-type 19; degenerate zinc finger occupies 751–773; sequence YECGESSKVFKYNSSLIKHQIIH. Residues K761 and K768 each participate in a glycyl lysine isopeptide (Lys-Gly) (interchain with G-Cter in SUMO2) cross-link.

The protein belongs to the krueppel C2H2-type zinc-finger protein family.

Its subcellular location is the nucleus. Functionally, may be involved in transcriptional regulation. The chain is Zinc finger protein 749 (ZNF749) from Homo sapiens (Human).